A 416-amino-acid polypeptide reads, in one-letter code: Serine hydroxymethyltransferase (416 aa).

(6S)-5,6,7,8-tetrahydrofolate-binding positions include leucine 120 and 124–126 (GHL). Lysine 230 is subject to N6-(pyridoxal phosphate)lysine. Glutamate 246 lines the (6S)-5,6,7,8-tetrahydrofolate pocket.

The protein belongs to the SHMT family. In terms of assembly, homodimer. The cofactor is pyridoxal 5'-phosphate.

The protein resides in the cytoplasm. The enzyme catalyses (6R)-5,10-methylene-5,6,7,8-tetrahydrofolate + glycine + H2O = (6S)-5,6,7,8-tetrahydrofolate + L-serine. Its pathway is one-carbon metabolism; tetrahydrofolate interconversion. It participates in amino-acid biosynthesis; glycine biosynthesis; glycine from L-serine: step 1/1. Functionally, catalyzes the reversible interconversion of serine and glycine with tetrahydrofolate (THF) serving as the one-carbon carrier. This reaction serves as the major source of one-carbon groups required for the biosynthesis of purines, thymidylate, methionine, and other important biomolecules. Also exhibits THF-independent aldolase activity toward beta-hydroxyamino acids, producing glycine and aldehydes, via a retro-aldol mechanism. In Onion yellows phytoplasma (strain OY-M), this protein is Serine hydroxymethyltransferase.